Here is a 1163-residue protein sequence, read N- to C-terminus: AF4/FMR2 family member 4 (1163 aa).

Residues 1 to 19 show a composition bias toward basic and acidic residues; it reads MNREDRNVLRMKERERRNQ. Disordered stretches follow at residues 1-48, 76-312, 324-904, and 1034-1073; these read MNRE…EDKL, AIPK…ASGD, THSW…PRRT, and NSYN…SSGA. Residues 115–128 are compositionally biased toward polar residues; the sequence is PSTSQSQKRSSGLQ. The residue at position 120 (Ser120) is a Phosphoserine. 2 stretches are compositionally biased toward low complexity: residues 129-148 and 177-194; these read SGHS…NSSG and RSSS…NSSH. A compositionally biased stretch (basic and acidic residues) spans 198–217; the sequence is HGNDHHSKEHQRSKSPRDPD. Position 212 is a phosphoserine (Ser212). Polar residues-rich tracts occupy residues 227-251, 273-285, and 350-375; these read PFSS…SMLQ, EHYS…NSMT, and KESQ…NGHQ. Residues Ser387, Ser388, Ser389, and Ser392 each carry the phosphoserine modification. Residues 403–412 show a composition bias toward polar residues; it reads PRSTPGSNSE. Basic and acidic residues predominate over residues 413–429; the sequence is PSHHNSEGADNSRDDSS. A compositionally biased stretch (low complexity) spans 430-462; sequence SHSGSESSSGSDSESESSSSDSEANEPSQSASP. Ser487, Ser490, and Ser491 each carry phosphoserine. Polar residues-rich tracts occupy residues 488 to 501, 510 to 528, and 549 to 560; these read PASS…SSQG, GTGN…SSAT, and SPAQSDSTTQRR. Position 549 is a phosphoserine (Ser549). Over residues 568 to 586 the composition is skewed to basic and acidic residues; it reads KKAEKAAAEEPRGGLKIES. Lys583 participates in a covalent cross-link: Glycyl lysine isopeptide (Lys-Gly) (interchain with G-Cter in SUMO2). The span at 599–612 shows a compositional bias: basic residues; it reads SRHKAATKGSRKPN. The span at 613–627 shows a compositional bias: basic and acidic residues; it reads IKKESKSSPRPTAEK. Ser671 bears the Phosphoserine mark. Residue Thr674 is modified to Phosphothreonine. 4 positions are modified to phosphoserine: Ser680, Ser694, Ser703, and Ser706. At Tyr712 the chain carries Phosphotyrosine. 3 stretches are compositionally biased toward basic and acidic residues: residues 730–761, 769–789, and 799–811; these read PYKE…EKVS, KNED…DKNS, and ESSK…EKDL. Ser814 carries the post-translational modification Phosphoserine. Residue Lys822 is modified to N6-acetyllysine. Ser836, Ser1043, Ser1055, Ser1058, and Ser1062 each carry phosphoserine. Positions 836 to 862 are enriched in low complexity; it reads SQSSSLKSSSNSNKETSGSSKNSSSTS. Residues 1062–1073 are compositionally biased toward low complexity; the sequence is SPGNSGNYSSGA.

Belongs to the AF4 family. As to quaternary structure, component of the super elongation complex (SEC), at least composed of EAF1, EAF2, CDK9, MLLT3/AF9, AFF (AFF1 or AFF4), the P-TEFb complex and ELL (ELL, ELL2 or ELL3). Interacts with ELL3; the interaction is direct. Interacts with ELL2; the interaction is direct and leads to stabilize ELL2 and prevent ELL2 ubiquitination and degradation. Dephosphorylated at Ser-549 by the PNUTS-PP1 complex, promoting RNA polymerase II transcription pause-release. In terms of tissue distribution, ubiquitously expressed. Strongly expressed in heart, placenta, skeletal muscle, pancreas and to a lower extent in brain.

Its subcellular location is the nucleus. The protein resides in the chromosome. Functionally, key component of the super elongation complex (SEC), a complex required to increase the catalytic rate of RNA polymerase II transcription by suppressing transient pausing by the polymerase at multiple sites along the DNA. In the SEC complex, AFF4 acts as a central scaffold that recruits other factors through direct interactions with ELL proteins (ELL, ELL2 or ELL3) and the P-TEFb complex. In case of infection by HIV-1 virus, the SEC complex is recruited by the viral Tat protein to stimulate viral gene expression. This chain is AF4/FMR2 family member 4 (AFF4), found in Homo sapiens (Human).